Consider the following 461-residue polypeptide: Chromosomal replication initiator protein DnaA (461 aa).

Positions 1–83 are domain I, interacts with DnaA modulators; the sequence is MDHSPWQRCL…LRFDVGSKPT (83 aa). The domain II stretch occupies residues 83–124; it reads TIDNSVTNSPVSRNTGGNESLFAKATSAPKVAEPESNIPKKT. The domain III, AAA+ region stretch occupies residues 125–341; the sequence is NVRLNYTFEN…GALNRVIANA (217 aa). ATP-binding residues include Gly-169, Gly-171, Lys-172, and Thr-173. Residues 342 to 461 form a domain IV, binds dsDNA region; that stretch reads NFTGRAITID…YSNLIRTLSS (120 aa).

This sequence belongs to the DnaA family. Oligomerizes as a right-handed, spiral filament on DNA at oriC.

The protein resides in the cytoplasm. Its function is as follows. Plays an essential role in the initiation and regulation of chromosomal replication. ATP-DnaA binds to the origin of replication (oriC) to initiate formation of the DNA replication initiation complex once per cell cycle. Binds the DnaA box (a 9 base pair repeat at the origin) and separates the double-stranded (ds)DNA. Forms a right-handed helical filament on oriC DNA; dsDNA binds to the exterior of the filament while single-stranded (ss)DNA is stabiized in the filament's interior. The ATP-DnaA-oriC complex binds and stabilizes one strand of the AT-rich DNA unwinding element (DUE), permitting loading of DNA polymerase. After initiation quickly degrades to an ADP-DnaA complex that is not apt for DNA replication. Binds acidic phospholipids. The protein is Chromosomal replication initiator protein DnaA of Colwellia psychrerythraea (strain 34H / ATCC BAA-681) (Vibrio psychroerythus).